A 585-amino-acid chain; its full sequence is YTH domain-containing family protein 3 (585 aa).

Disordered stretches follow at residues Met1–Pro51, Lys244–Gly277, and Pro304–Leu350. Ser2 is subject to N-acetylserine. A compositionally biased stretch (polar residues) spans Asn15–Ile24. A Phosphoserine modification is found at Ser23. A compositionally biased stretch (basic residues) spans Lys244–Pro254. Residues Gln329–Leu350 show a composition bias toward low complexity. The 135-residue stretch at Gly416–Ile550 folds into the YTH domain. Residues Lys422–Tyr424, Asp428, Trp438–Cys439, Asn468, Trp492, and Trp497 contribute to the RNA site.

It belongs to the YTHDF family. YTHDF3 subfamily. In terms of assembly, interacts with CNOT1; promoting recruitment of the CCR4-NOT complex. Interacts with YTHDF1. Interacts with YTHDF2. Interacts with PAN3.

Its subcellular location is the cytoplasm. It localises to the cytosol. It is found in the P-body. The protein resides in the stress granule. In terms of biological role, specifically recognizes and binds N6-methyladenosine (m6A)-containing RNAs, and regulates their stability. M6A is a modification present at internal sites of mRNAs and some non-coding RNAs and plays a role in mRNA stability and processing. Acts as a regulator of mRNA stability by promoting degradation of m6A-containing mRNAs via interaction with the CCR4-NOT complex or PAN3. The YTHDF paralogs (YTHDF1, YTHDF2 and YTHDF3) share m6A-containing mRNAs targets and act redundantly to mediate mRNA degradation and cellular differentiation. Acts as a negative regulator of type I interferon response by down-regulating interferon-stimulated genes (ISGs) expression: acts by binding to FOXO3 mRNAs. Binds to FOXO3 mRNAs independently of METTL3-mediated m6A modification. Can also act as a regulator of mRNA stability in cooperation with YTHDF2 by binding to m6A-containing mRNA and promoting their degradation. Recognizes and binds m6A-containing circular RNAs (circRNAs); circRNAs are generated through back-splicing of pre-mRNAs, a non-canonical splicing process promoted by dsRNA structures across circularizing exons. Promotes formation of phase-separated membraneless compartments, such as P-bodies or stress granules, by undergoing liquid-liquid phase separation upon binding to mRNAs containing multiple m6A-modified residues: polymethylated mRNAs act as a multivalent scaffold for the binding of YTHDF proteins, juxtaposing their disordered regions and thereby leading to phase separation. The resulting mRNA-YTHDF complexes then partition into different endogenous phase-separated membraneless compartments, such as P-bodies, stress granules or neuronal RNA granules. May also recognize and bind N1-methyladenosine (m1A)-containing mRNAs: inhibits trophoblast invasion by binding to m1A-methylated transcripts of IGF1R, promoting their degradation. This is YTH domain-containing family protein 3 from Mus musculus (Mouse).